Here is a 227-residue protein sequence, read N- to C-terminus: MRKRKLSDGVRCSARQKNRSCSGAQSSTDHEADTYGPKKKAASSNNTEKESSKKLRKDEKGPVEADENELLNKIDNAASNESSNVNDSQQSEKSITNTKDNGTRCSKLRANTRLPSSPVSDLNEVSCNGLTDDSGDGTGFIHKTCSEPSKLREIYLNGSPFVDEDSNQPMPLGLFFENADLMQDLPPAVPSCASMSRRELRNLHFRAKEEDEDDDDYVDGLANEGNI.

2 disordered regions span residues 1 to 122 (MRKR…VSDL) and 207 to 227 (AKEE…EGNI). Basic and acidic residues predominate over residues 47–63 (TEKESSKKLRKDEKGPV). Composition is skewed to polar residues over residues 77 to 104 (AASN…NGTR) and 113 to 122 (RLPSSPVSDL).

This sequence belongs to the UPF0688 family.

Its subcellular location is the nucleus. This is UPF0688 protein C1orf174 homolog from Xenopus tropicalis (Western clawed frog).